The primary structure comprises 744 residues: Cytoskeleton-associated protein 2-like (744 aa).

Disordered stretches follow at residues 35–56 (YLKAKNNCPNPPHSKSTIGPKK), 76–169 (LQSR…THVE), 182–216 (KENLPQDLPNSERKPNPESWTINKPQTNQTKSSLA), 317–337 (TVTEQKVKHSKPSTHPSVLQG), and 428–452 (NKTAPRTQAGGPTISGRGVPNGAQT). Polar residues-rich tracts occupy residues 76–86 (LQSRPANITRS), 102–129 (SESVSSNPNGKPPGNSQQLRGFGSSTDG), and 137–154 (GSLNVQKLKTTKQQVTDQ). Lys-195 is covalently cross-linked (Glycyl lysine isopeptide (Lys-Gly) (interchain with G-Cter in SUMO1); alternate). Lys-195 is covalently cross-linked (Glycyl lysine isopeptide (Lys-Gly) (interchain with G-Cter in SUMO2); alternate). Positions 199–216 (ESWTINKPQTNQTKSSLA) are enriched in polar residues. Ser-744 is subject to Phosphoserine.

Belongs to the CKAP2 family. Ubiquitinated by the anaphase promoting complex/cyclosome (APC/C).

The protein resides in the cytoplasm. It is found in the cytoskeleton. The protein localises to the spindle pole. Its function is as follows. Microtubule-associated protein required for mitotic spindle formation and cell-cycle progression in neural progenitor cells. This is Cytoskeleton-associated protein 2-like (CKAP2L) from Bos taurus (Bovine).